A 379-amino-acid polypeptide reads, in one-letter code: Cytochrome b (379 aa).

4 consecutive transmembrane segments (helical) span residues 33–53 (FGSL…FLAM), 77–98 (WTIR…FIHV), 113–133 (WNVG…GYVL), and 178–198 (FFAL…IHLL). H83 and H97 together coordinate heme b. Heme b-binding residues include H182 and H196. Position 201 (H201) interacts with a ubiquinone. A run of 4 helical transmembrane segments spans residues 226-246 (TKDF…ALFY), 288-308 (LGGV…PFLQ), 320-340 (LSQF…WIGG), and 347-367 (FINI…FIMP).

This sequence belongs to the cytochrome b family. The cytochrome bc1 complex contains 11 subunits: 3 respiratory subunits (MT-CYB, CYC1 and UQCRFS1), 2 core proteins (UQCRC1 and UQCRC2) and 6 low-molecular weight proteins (UQCRH/QCR6, UQCRB/QCR7, UQCRQ/QCR8, UQCR10/QCR9, UQCR11/QCR10 and a cleavage product of UQCRFS1). This cytochrome bc1 complex then forms a dimer. The cofactor is heme b.

Its subcellular location is the mitochondrion inner membrane. Component of the ubiquinol-cytochrome c reductase complex (complex III or cytochrome b-c1 complex) that is part of the mitochondrial respiratory chain. The b-c1 complex mediates electron transfer from ubiquinol to cytochrome c. Contributes to the generation of a proton gradient across the mitochondrial membrane that is then used for ATP synthesis. This chain is Cytochrome b (MT-CYB), found in Lepilemur dorsalis (Grey-backed sportive lemur).